A 698-amino-acid chain; its full sequence is Cytochrome c oxidase subunit 1 (698 aa).

Residues 65 to 85 form a helical membrane-spanning segment; sequence INYLYFSMVTGLSGAALATMI. A Ca(2+)-binding site is contributed by glutamate 88. Histidine 111 provides a ligand contact to Fe(II)-heme a. 8 helical membrane-spanning segments follow: residues 113 to 133, 147 to 167, 304 to 324, 349 to 369, 395 to 415, 434 to 454, 468 to 488, and 498 to 518; these read LIMV…NFLI, LNSI…KIGF, ILIL…TNLL, IFLT…AVIM, LFWF…FGFI, IWAI…HMYL, ITIM…LSLV, and FLFS…GMWL. Histidine 401 contributes to the Cu cation binding site. The 1'-histidyl-3'-tyrosine (His-Tyr) cross-link spans 401 to 405; it reads HPEVY. Tyrosine 405 contacts O2. Histidine 450 and histidine 451 together coordinate Cu cation. Residues histidine 528 and aspartate 529 each contribute to the Mg(2+) site. 3 helical membrane passes run 533–553, 574–594, and 613–633; these read VVAH…FSGF, LIYY…LGFS, and MSTA…LMIF. Residue histidine 536 participates in heme a3 binding. Histidine 538 lines the Fe(II)-heme a pocket.

The protein belongs to the heme-copper respiratory oxidase family. As to quaternary structure, component of the cytochrome c oxidase (complex IV, CIV), a multisubunit enzyme composed of a catalytic core of 3 subunits and several supernumerary subunits. The complex exists as a monomer or a dimer and forms supercomplexes (SCs) in the inner mitochondrial membrane with ubiquinol-cytochrome c oxidoreductase (cytochrome b-c1 complex, complex III, CIII). The cofactor is heme. Cu cation serves as cofactor.

The protein resides in the mitochondrion inner membrane. It catalyses the reaction 4 Fe(II)-[cytochrome c] + O2 + 8 H(+)(in) = 4 Fe(III)-[cytochrome c] + 2 H2O + 4 H(+)(out). Its pathway is energy metabolism; oxidative phosphorylation. In terms of biological role, component of the cytochrome c oxidase, the last enzyme in the mitochondrial electron transport chain which drives oxidative phosphorylation. The respiratory chain contains 3 multisubunit complexes succinate dehydrogenase (complex II, CII), ubiquinol-cytochrome c oxidoreductase (cytochrome b-c1 complex, complex III, CIII) and cytochrome c oxidase (complex IV, CIV), that cooperate to transfer electrons derived from NADH and succinate to molecular oxygen, creating an electrochemical gradient over the inner membrane that drives transmembrane transport and the ATP synthase. Cytochrome c oxidase is the component of the respiratory chain that catalyzes the reduction of oxygen to water. Electrons originating from reduced cytochrome c in the intermembrane space (IMS) are transferred via the dinuclear copper A center (CU(A)) of subunit 2 and heme A of subunit 1 to the active site in subunit 1, a binuclear center (BNC) formed by heme A3 and copper B (CU(B)). The BNC reduces molecular oxygen to 2 water molecules using 4 electrons from cytochrome c in the IMS and 4 protons from the mitochondrial matrix. The protein is Cytochrome c oxidase subunit 1 (COI) of Tetrahymena pyriformis.